The primary structure comprises 558 residues: Cyclomaltodextrinase (558 aa).

Positions 143, 168, and 170 each coordinate Ca(2+). 2 residues coordinate substrate: His243 and Arg323. Residue Asp325 is the Nucleophile of the active site. Catalysis depends on Glu354, which acts as the Proton donor. Substrate contacts are provided by residues 420–421 (HD), Asp465, and Arg469.

The protein belongs to the glycosyl hydrolase 13 family. As to quaternary structure, monomer. Depending on the pH of the solution, exists as a monomer, a homodimer or as an assembly of six homodimers forming a dodecamer, which is catalytically the most efficient form of the enzyme. Requires Ca(2+) as cofactor.

It catalyses the reaction cyclomaltodextrin + H2O = linear maltodextrin. The catalysed reaction is Hydrolysis of pullulan to panose (6-alpha-D-glucosylmaltose).. With respect to regulation, hydrolysis of beta-cyclodextrin is inhibited by Cu(2+), Zn(2+) and Ag(+), and activated by Ca(2+), EGTA and EDTA. Activity is increased over twofold in the presence of 5 mM EDTA. Competitively inhibited by acarbose and methyl 6-amino-6-deoxy-alpha-D-glucopyranoside by reducing the rate of the ring opening step of the reaction. In terms of biological role, hydrolyzes alpha-, beta- and gamma-cyclodextrins and the resulting linear maltodextrins, with the highest activity with beta-cyclodextrin (cyclomaltoheptaose). Soluble starch is hydrolyzed slowly, but it is nevertheless preferred over pullulan as a substrate. Is able to hydrolyze amylose and amylopectin, with a very strong preference for amylose, with maltose and glucose as the main products. Maltose and glucose are the main hydrolysis products of cyclomaltodextrins, maltodextrins and starch, whereas panose is the main hydrolysis product of pullulan. Acarbose is partially hydrolyzed to glucose and pseudotrisaccharide. No activity with maltose as substrate. Has transglycosylating activity with high concentrations of maltotriose, maltotetraose and starch. The sequence is that of Cyclomaltodextrinase from Bacillus sp.